The sequence spans 83 residues: Small ribosomal subunit protein eS21 (83 aa).

The protein belongs to the eukaryotic ribosomal protein eS21 family. Component of the 40S small ribosomal subunit.

The protein resides in the cytoplasm. Its subcellular location is the cytosol. It is found in the rough endoplasmic reticulum. This chain is Small ribosomal subunit protein eS21 (RpS21), found in Biphyllus lunatus (Beetle).